Here is a 1137-residue protein sequence, read N- to C-terminus: Protein sel-1 homolog 3 (1137 aa).

The tract at residues 1 to 42 (MQWRGAGLWWPRRRQQQQQQQPPPPAFGPPAAAMVPPSRGVS) is disordered. Asparagine 206 and asparagine 387 each carry an N-linked (GlcNAc...) asparagine glycan. Sel1-like repeat units follow at residues 575–609 (HKASYYLTVFYETGLNGPRDQLQGMLYSLVGGQGS), 611–647 (RLSSMNLGYKHYQGVDSYPLDWELSYAYYSNIATKTP), 694–730 (AAAQQRLAQMLFWGQQGVAKNPEAAIEWYAKGALETE), 732–767 (PALIYDYAIVLFKGQGVKKNRRLALELMKKAASKGL), 768–800 (HQAVNGLGWYYHKFRKNYAKAAKYWLKAEEMGN), 801–839 (PDASYNLGVLYLDGIFPGVPGRNLTLAGEYFHKAAQGGH), and 840–877 (IEGTLWCSLYYITGNLETFPRDPEKAVVWAKHVAEKNG). Residue serine 613 is modified to Phosphoserine. N-linked (GlcNAc...) asparagine glycosylation occurs at asparagine 942. Residues 952–988 (SFAYLKMGDLYYYGHQNQSQDLELSVQMYAQAALDGD) form a Sel1-like 8 repeat. Residues 1067-1087 (LIYFLGTFLLSVVIAWMVLYL) traverse the membrane as a helical segment. Residues 1100–1137 (AWVSADPTSSTPSPAVPPAADASDHDPPMMANGPEPRG) form a disordered region. Residues 1102–1120 (VSADPTSSTPSPAVPPAAD) show a composition bias toward low complexity.

The protein localises to the membrane. The polypeptide is Protein sel-1 homolog 3 (Sel1l3) (Mus musculus (Mouse)).